We begin with the raw amino-acid sequence, 191 residues long: Large ribosomal subunit protein uL5 (191 aa).

Belongs to the universal ribosomal protein uL5 family. As to quaternary structure, part of the 50S ribosomal subunit; part of the 5S rRNA/L5/L18/L25 subcomplex. Contacts the 5S rRNA and the P site tRNA. Forms a bridge to the 30S subunit in the 70S ribosome.

In terms of biological role, this is one of the proteins that bind and probably mediate the attachment of the 5S RNA into the large ribosomal subunit, where it forms part of the central protuberance. In the 70S ribosome it contacts protein S13 of the 30S subunit (bridge B1b), connecting the 2 subunits; this bridge is implicated in subunit movement. Contacts the P site tRNA; the 5S rRNA and some of its associated proteins might help stabilize positioning of ribosome-bound tRNAs. This chain is Large ribosomal subunit protein uL5, found in Micrococcus luteus (Micrococcus lysodeikticus).